Reading from the N-terminus, the 524-residue chain is Putative cysteine ligase BshC (524 aa).

Residues 437-457 (AQALDRSARKINYQIEKMERK) adopt a coiled-coil conformation.

The protein belongs to the BshC family.

In Solibacter usitatus (strain Ellin6076), this protein is Putative cysteine ligase BshC.